The following is a 347-amino-acid chain: Spermidine/putrescine import ATP-binding protein PotA (347 aa).

The 231-residue stretch at 6 to 236 folds into the ABC transporter domain; sequence IEIKNVYKEF…PKNAFVAKFI (231 aa). Position 38-45 (38-45) interacts with ATP; that stretch reads GPSGCGKT.

Belongs to the ABC transporter superfamily. Spermidine/putrescine importer (TC 3.A.1.11.1) family. As to quaternary structure, the complex is composed of two ATP-binding proteins (PotA), two transmembrane proteins (PotB and PotC) and a solute-binding protein (PotD).

Its subcellular location is the cell membrane. It carries out the reaction ATP + H2O + polyamine-[polyamine-binding protein]Side 1 = ADP + phosphate + polyamineSide 2 + [polyamine-binding protein]Side 1.. Its function is as follows. Part of the ABC transporter complex PotABCD involved in spermidine/putrescine import. Responsible for energy coupling to the transport system. The protein is Spermidine/putrescine import ATP-binding protein PotA of Clostridium novyi (strain NT).